A 447-amino-acid polypeptide reads, in one-letter code: Tubulin beta chain (447 aa).

GTP contacts are provided by Q11, E69, S138, G142, T143, G144, N204, and N226. Mg(2+) is bound at residue E69. Residues 427–447 (DAGIDEEEEEYEEELPLEGEE) are disordered. A compositionally biased stretch (acidic residues) spans 429–447 (GIDEEEEEYEEELPLEGEE).

Belongs to the tubulin family. In terms of assembly, dimer of alpha and beta chains. A typical microtubule is a hollow water-filled tube with an outer diameter of 25 nm and an inner diameter of 15 nM. Alpha-beta heterodimers associate head-to-tail to form protofilaments running lengthwise along the microtubule wall with the beta-tubulin subunit facing the microtubule plus end conferring a structural polarity. Microtubules usually have 13 protofilaments but different protofilament numbers can be found in some organisms and specialized cells. The cofactor is Mg(2+).

It localises to the cytoplasm. It is found in the cytoskeleton. Its function is as follows. Tubulin is the major constituent of microtubules, a cylinder consisting of laterally associated linear protofilaments composed of alpha- and beta-tubulin heterodimers. Microtubules grow by the addition of GTP-tubulin dimers to the microtubule end, where a stabilizing cap forms. Below the cap, tubulin dimers are in GDP-bound state, owing to GTPase activity of alpha-tubulin. The polypeptide is Tubulin beta chain (TUB2) (Hapsidospora chrysogena (Acremonium chrysogenum)).